The sequence spans 68 residues: Cytotoxic linear peptide IsCT (68 aa).

An N-terminal signal peptide occupies residues 1–23 (MKTQFAILLVALVLFQMFAQSDA). F36 carries the phenylalanine amide modification. A propeptide spanning residues 40 to 68 (GLSDLDGLDELFDGEISKADRDFLRELMR) is cleaved from the precursor.

The protein belongs to the non-disulfide-bridged peptide (NDBP) superfamily. Short antimicrobial peptide (group 4) family. Post-translationally, isCTf is an enzymatic proteolytic cleavage product of IsCT by the proteases present in the venom. In terms of tissue distribution, expressed by the venom gland.

The protein localises to the secreted. Its subcellular location is the target cell membrane. Shows weak hemolytic activity and antibacterial activity against both Gram-positive and Gram-negative bacteria probably by forming pores in the cell membrane. IsCT adopts an amphipathic alpha-helical structure. In terms of biological role, shows neither hemolytic, nor antibacterial activities, probably because it cannot adopt amphipathic alpha-helical structure. This chain is Cytotoxic linear peptide IsCT, found in Opisthacanthus madagascariensis (Scorpion).